A 223-amino-acid chain; its full sequence is MHQSSLSLDFFGSPHERVQKALASLRAGGGVLVVDDEDRENEGDLIFPAQTITVPQMAMLIRHCSGIVCLCLTDEYTRRLDLPMMTERNTNTQQTAFTISIEAATGVTTGVSAADRVATIQAAVAENASPENLRRPGHVFPLRAKPGGVLERRGHTEATVDLMRLAGHAPCGVLCELTLDDGSMARLPQVAAFAVAHAIPLCSVEDLVAWRHGLGEENIAISA.

Residues arginine 39–glutamate 40, aspartate 44, arginine 152–threonine 156, and glutamate 176 contribute to the D-ribulose 5-phosphate site. Glutamate 40 provides a ligand contact to Mg(2+). Residue histidine 155 coordinates Mg(2+).

Belongs to the DHBP synthase family. Homodimer. Mg(2+) serves as cofactor. It depends on Mn(2+) as a cofactor.

The catalysed reaction is D-ribulose 5-phosphate = (2S)-2-hydroxy-3-oxobutyl phosphate + formate + H(+). It participates in cofactor biosynthesis; riboflavin biosynthesis; 2-hydroxy-3-oxobutyl phosphate from D-ribulose 5-phosphate: step 1/1. Functionally, catalyzes the conversion of D-ribulose 5-phosphate to formate and 3,4-dihydroxy-2-butanone 4-phosphate. This chain is 3,4-dihydroxy-2-butanone 4-phosphate synthase, found in Desulfovibrio desulfuricans (strain ATCC 27774 / DSM 6949 / MB).